The chain runs to 321 residues: GDP-L-fucose synthase (321 aa).

Residue G14 to G20 coordinates NADP(+). Catalysis depends on Y143, which acts as the Proton donor/acceptor. NADP(+)-binding positions include K147, P170–V173, and H186. Substrate is bound by residues K194, W208, R215, and D277.

The protein belongs to the NAD(P)-dependent epimerase/dehydratase family. Fucose synthase subfamily. Homodimer.

It catalyses the reaction GDP-beta-L-fucose + NADP(+) = GDP-4-dehydro-alpha-D-rhamnose + NADPH + H(+). The protein operates within nucleotide-sugar biosynthesis; GDP-L-fucose biosynthesis via de novo pathway; GDP-L-fucose from GDP-alpha-D-mannose: step 2/2. Catalyzes the two-step NADP-dependent conversion of GDP-4-dehydro-6-deoxy-D-mannose to GDP-fucose, involving an epimerase and a reductase reaction. This is GDP-L-fucose synthase from Homo sapiens (Human).